The following is a 256-amino-acid chain: Imidazole glycerol phosphate synthase subunit HisF (256 aa).

Active-site residues include Asp11 and Asp130.

This sequence belongs to the HisA/HisF family. Heterodimer of HisH and HisF.

Its subcellular location is the cytoplasm. It carries out the reaction 5-[(5-phospho-1-deoxy-D-ribulos-1-ylimino)methylamino]-1-(5-phospho-beta-D-ribosyl)imidazole-4-carboxamide + L-glutamine = D-erythro-1-(imidazol-4-yl)glycerol 3-phosphate + 5-amino-1-(5-phospho-beta-D-ribosyl)imidazole-4-carboxamide + L-glutamate + H(+). It participates in amino-acid biosynthesis; L-histidine biosynthesis; L-histidine from 5-phospho-alpha-D-ribose 1-diphosphate: step 5/9. Functionally, IGPS catalyzes the conversion of PRFAR and glutamine to IGP, AICAR and glutamate. The HisF subunit catalyzes the cyclization activity that produces IGP and AICAR from PRFAR using the ammonia provided by the HisH subunit. The sequence is that of Imidazole glycerol phosphate synthase subunit HisF from Synechococcus sp. (strain CC9605).